Reading from the N-terminus, the 381-residue chain is Dihydroorotate dehydrogenase (quinone) (381 aa).

Residues 74-78 and Thr-98 contribute to the FMN site; that span reads AGFDK. Lys-78 serves as a coordination point for substrate. Position 123 to 127 (123 to 127) interacts with substrate; that stretch reads NRMGF. Asn-152 and Asn-185 together coordinate FMN. Asn-185 is a substrate binding site. The Nucleophile role is filled by Ser-188. Asn-190 is a binding site for substrate. 2 residues coordinate FMN: Lys-223 and Thr-251. 252–253 is a substrate binding site; that stretch reads NT. Residues Gly-289, Gly-318, and 339 to 340 contribute to the FMN site; that span reads YT. Positions 359-381 are disordered; sequence RSSPPSPDVTLPPENTPVGQIQA.

Belongs to the dihydroorotate dehydrogenase family. Type 2 subfamily. In terms of assembly, monomer. It depends on FMN as a cofactor.

The protein localises to the cell membrane. It carries out the reaction (S)-dihydroorotate + a quinone = orotate + a quinol. The protein operates within pyrimidine metabolism; UMP biosynthesis via de novo pathway; orotate from (S)-dihydroorotate (quinone route): step 1/1. Catalyzes the conversion of dihydroorotate to orotate with quinone as electron acceptor. The sequence is that of Dihydroorotate dehydrogenase (quinone) from Synechococcus sp. (strain JA-2-3B'a(2-13)) (Cyanobacteria bacterium Yellowstone B-Prime).